Here is a 275-residue protein sequence, read N- to C-terminus: Large ribosomal subunit protein uL2 (275 aa).

The segment at 220 to 275 (QTRGAAMNPVDHPHGGGEGKTGSSGHPVSPWGMPAKGFKTRKKKASDKLIISRRKK) is disordered. Residues 257-275 (FKTRKKKASDKLIISRRKK) are compositionally biased toward basic residues.

Belongs to the universal ribosomal protein uL2 family. Part of the 50S ribosomal subunit. Forms a bridge to the 30S subunit in the 70S ribosome.

One of the primary rRNA binding proteins. Required for association of the 30S and 50S subunits to form the 70S ribosome, for tRNA binding and peptide bond formation. It has been suggested to have peptidyltransferase activity; this is somewhat controversial. Makes several contacts with the 16S rRNA in the 70S ribosome. This chain is Large ribosomal subunit protein uL2, found in Wolinella succinogenes (strain ATCC 29543 / DSM 1740 / CCUG 13145 / JCM 31913 / LMG 7466 / NCTC 11488 / FDC 602W) (Vibrio succinogenes).